Here is a 396-residue protein sequence, read N- to C-terminus: Probable glucan endo-1,6-beta-glucosidase B (396 aa).

A signal peptide spans 1 to 17; it reads MIRRLAAFSALSGLATA. Asparagine 30 carries an N-linked (GlcNAc...) asparagine glycan. Glutamate 219 serves as the catalytic Proton donor. Asparagine 272 carries an N-linked (GlcNAc...) asparagine glycan. Glutamate 320 functions as the Nucleophile in the catalytic mechanism.

It belongs to the glycosyl hydrolase 5 (cellulase A) family.

It is found in the secreted. It catalyses the reaction Random hydrolysis of (1-&gt;6)-linkages in (1-&gt;6)-beta-D-glucans.. Functionally, beta-glucanases participate in the metabolism of beta-glucan, the main structural component of the cell wall. Acts on lutean, pustulan and 1,6-oligo-beta-D-glucosides. The chain is Probable glucan endo-1,6-beta-glucosidase B (exgB) from Aspergillus fumigatus (strain CBS 144.89 / FGSC A1163 / CEA10) (Neosartorya fumigata).